Reading from the N-terminus, the 604-residue chain is Kelch-like protein 15 (604 aa).

Residues Leu-31 to Met-98 enclose the BTB domain. The BACK domain maps to Cys-133–Lys-237. 5 Kelch repeats span residues Phe-328–Lys-379, Ile-381–Asn-426, Leu-428–Lys-473, Lys-489–Lys-542, and Ile-544–Leu-590.

Homodimer. Dimerization does not affect PPP2R5B-binding, but is required for its proteasomal degradation. Interacts with CUL3. Directly interacts with PPP2R5B; this interaction leads to PPP2R5B proteasomal degradation. Interacts with RBBP8/CtIP; this interaction leads to RBBP8 proteasomal degradation. Interacts with PACMP micropeptide; interaction prevents ubiquitination and degradation of RBBP8/CtIP.

The protein localises to the nucleus. It participates in protein modification; protein ubiquitination. Functionally, substrate-specific adapter for CUL3 E3 ubiquitin-protein ligase complex. Acts as an adapter for CUL3 to target the serine/threonine-protein phosphatase 2A (PP2A) subunit PPP2R5B for ubiquitination and subsequent proteasomal degradation, thus promoting exchange with other regulatory subunits and regulating PP2A holoenzyme composition. Acts as an adapter for CUL3 to target the DNA-end resection factor RBBP8/CtIP for ubiquitination and subsequent proteasomal degradation. Through the regulation of RBBP8/CtIP protein turnover, plays a key role in DNA damage response, favoring DNA double-strand repair through error-prone non-homologous end joining (NHEJ) over error-free, RBBP8-mediated homologous recombination (HR). The sequence is that of Kelch-like protein 15 (Klhl15) from Mus musculus (Mouse).